The primary structure comprises 266 residues: Enterotoxin type C-3 (266 aa).

Positions 1–27 are cleaved as a signal peptide; sequence MYKRLFISRVILIFALILVISTPNVLA. Zn(2+) contacts are provided by aspartate 36 and aspartate 110. Cysteine 120 and cysteine 137 form a disulfide bridge. Zn(2+) is bound by residues histidine 145 and histidine 149.

Belongs to the staphylococcal/streptococcal toxin family. Interacts with MHC class II molecules composed of alpha/HLA-DRA and beta/HLA-DRB1 chains. Interacts with host T-cell receptor/TCR beta variable chain TRBV8-2.

Its subcellular location is the secreted. Functionally, staphylococcal enterotoxin that activates the host immune system by binding as unprocessed molecules to major histocompatibility (MHC) complex class II and T-cell receptor (TCR) molecules. In turn, this ternary complex activates a large number of T-lymphocytes initiating a systemic release of pro-inflammatory cytokines. Also causes the intoxication staphylococcal food poisoning syndrome. The protein is Enterotoxin type C-3 (entC3) of Staphylococcus aureus.